A 549-amino-acid polypeptide reads, in one-letter code: Cytoplasmic trehalase (549 aa).

Residues Arg-168, 175 to 176 (WD), Asn-212, 221 to 223 (RSQ), 292 to 294 (RDE), and Gly-324 each bind substrate. Active-site proton donor/acceptor residues include Asp-326 and Glu-509. Glu-525 is a binding site for substrate.

The protein belongs to the glycosyl hydrolase 37 family. Monomer.

The protein resides in the cytoplasm. It catalyses the reaction alpha,alpha-trehalose + H2O = alpha-D-glucose + beta-D-glucose. Its pathway is glycan degradation; trehalose degradation; D-glucose from alpha,alpha-trehalose: step 1/1. Its function is as follows. Hydrolyzes trehalose to glucose. Could be involved, in cells returning to low osmolarity conditions, in the utilization of the accumulated cytoplasmic trehalose, which was synthesized in response to high osmolarity. The polypeptide is Cytoplasmic trehalase (Salmonella choleraesuis (strain SC-B67)).